We begin with the raw amino-acid sequence, 174 residues long: Ribosome maturation factor RimM (174 aa).

The 74-residue stretch at 98–171 folds into the PRC barrel domain; that stretch reads EGEFYFHQII…TIHIEVMEGL (74 aa).

The protein belongs to the RimM family. As to quaternary structure, binds ribosomal protein uS19.

It is found in the cytoplasm. Its function is as follows. An accessory protein needed during the final step in the assembly of 30S ribosomal subunit, possibly for assembly of the head region. Essential for efficient processing of 16S rRNA. May be needed both before and after RbfA during the maturation of 16S rRNA. It has affinity for free ribosomal 30S subunits but not for 70S ribosomes. This is Ribosome maturation factor RimM from Bacillus pumilus (strain SAFR-032).